Reading from the N-terminus, the 630-residue chain is Pro-interleukin-16 (630 aa).

Disordered regions lie at residues Glu30 to Thr268 and Pro316 to Thr343. Residues Ile129 to Ser143 are compositionally biased toward low complexity. Ser220 carries the post-translational modification Phosphoserine. Residues Ser321–Thr343 are compositionally biased toward polar residues. Residues Lys404–Ser500 form an interaction with PPP1R12A, PPP1R12B and PPP1R12C region. PDZ domains are found at residues His410 to Lys495 and Thr532 to Lys617.

As to quaternary structure, homotetramer. Pro-interleukin-16 interacts (via PDZ 2 domain) with PPP1R12A, PPP1R12B and PPP1R12C. Pro-interleukin-16 interacts with GRIN2A. Pro-interleukin-16 interacts with GABPB1. Pro-interleukin-16 interacts (via PDZ 3 domain) with HDAC3.

The protein localises to the secreted. It localises to the cytoplasm. Its subcellular location is the nucleus. Functionally, interleukin-16 stimulates a migratory response in CD4+ lymphocytes, monocytes, and eosinophils. Primes CD4+ T-cells for IL-2 and IL-15 responsiveness. Also induces T-lymphocyte expression of interleukin 2 receptor. Ligand for CD4. In terms of biological role, pro-interleukin-16 is involved in cell cycle progression in T-cells. Appears to be involved in transcriptional regulation of SKP2 and is probably part of a transcriptional repression complex on the core promoter of the SKP2 gene. May act as a scaffold for GABPB1 (the DNA-binding subunit the GABP transcription factor complex) and HDAC3 thus maintaining transcriptional repression and blocking cell cycle progression in resting T-cells. The polypeptide is Pro-interleukin-16 (IL16) (Macaca fascicularis (Crab-eating macaque)).